Reading from the N-terminus, the 960-residue chain is Anoctamin-1 (960 aa).

The Cytoplasmic portion of the chain corresponds to M1 to A333. Residues T92 to V115 form a disordered region. The residue at position 196 (S196) is a Phosphoserine. A helical transmembrane segment spans residues W334–L354. Residues Y355–N406 are Extracellular-facing. 4 disulfide bridges follow: C370-C395, C379-C836, C382-C386, and C625-C630. A helical transmembrane segment spans residues P407–W427. E425 is a binding site for Ca(2+). Topologically, residues K428–N493 are cytoplasmic. A helical transmembrane segment spans residues L494–Y514. Topologically, residues R515–A542 are extracellular. A helical membrane pass occupies residues V543 to W563. Residues L564 to T581 lie on the Cytoplasmic side of the membrane. The helical transmembrane segment at F582 to F602 threads the bilayer. Topologically, residues K603 to L631 are extracellular. A helical transmembrane segment spans residues M632 to L652. Ca(2+) contacts are provided by N651, E654, E702, E705, E734, and D738. The Cytoplasmic portion of the chain corresponds to F653–L699. 2 consecutive transmembrane segments (helical) span residues T700–F720 and P721–K741. The Cytoplasmic portion of the chain corresponds to F742–G758. The chain crosses the membrane as a helical span at residues I759–I779. Residues S780 to A866 are Extracellular-facing. A glycan (N-linked (GlcNAc...) asparagine) is linked at N806. Residues F867–P887 form a helical membrane-spanning segment. Ca(2+) is bound by residues D883 and D888. Residues D888–L960 lie on the Cytoplasmic side of the membrane. Positions P928–L960 are disordered.

This sequence belongs to the anoctamin family. As to quaternary structure, homodimer. Interacts with CFTR. Interacts with TRPV4. In terms of tissue distribution, expressed at the apical surface of the vomeronasal epithelium (at protein level). Expressed in the lateral and septal nasal glands (at protein level). Highly expressed in pulmonary bronchiole epithelial cells, pancreatic and submandibular gland acinar cells, kidney proximal tubule, all retinal cell layers, most sensory cells of dorsal root ganglia, Leydig cells and spermatocytes (at protein level). In the dorsal root ganglia, detected in small-diameter nociceptive neurons and in larger myelinated neurons (at protein level). In the dorsal root ganglia, expressed in MrgprA3-positive neurons (at protein level). In the developing brain, highly expressed in the ventricular zone and subventricular zone at 12.5 dpc and 14.5 dpc where it is detected in radial glial cells but not in neurons with expression dramatically decreased at P1 (at protein level). Highly expressed in the endometrial stroma (at protein level). In taste buds of the vallate papillae, expressed in the apical region of type I taste cells (at protein level). In the kidney, expressed in the collecting duct (at protein level). In the retina, strongly expressed in the outer and inner plexiform layers, weakly expressed in some somata in the inner nuclear layer and ganglion cell layer and not expressed in the outer nuclear layer (at protein level). Expressed in various retinal neurons including rod bipolar cells (at protein level). Expressed in eye, brain, myometrium and endometrium with higher levels in endometrium than myometrium in estrus and day 18 pregnant mice. Not detected in uterine smooth muscle cells. Expressed at high levels in the thyroid gland and gastrointestinal muscles.

It is found in the apical cell membrane. The protein resides in the presynapse. It catalyses the reaction chloride(in) = chloride(out). Its activity is regulated as follows. ATP and calmodulin are essential for its activation. Channel activity is inhibited by CFTR protein and by chloride inhibitors such as niflumic acid (NFA) and 4,4'-diisothiocyanatostilbene-2,2'-disulfonic acid (DIDS). Activated by heat with activation seen at temperatures above 44 degrees Celsius. Activated by BDNF in radial glial cells. Calcium-activated chloride channel (CaCC). Plays a role in transepithelial anion transport and smooth muscle contraction. Required for the normal functioning of the interstitial cells of Cajal (ICCs) which generate electrical pacemaker activity in gastrointestinal smooth muscles. Acts as a major contributor to basal and stimulated chloride conductance in airway epithelial cells and plays an important role in tracheal cartilage development. Required for CFTR activation by enhancing endoplasmic reticulum Ca(2+) store release and is also required for CFTR membrane expression. Required for basal and ATP-dependent mucus secretion in airways and intestine, probably by controlling exocytosis of mucus-filled granules by providing Ca(2+) to an apical signaling compartment. Contributes to airway mucus expression induced by interleukins IL3 and IL8 and by the asthma-associated protein CLCA1 and is required for expression of mucin MUC5AC. However, was shown in another study not to be required for MUC5AC expression. Plays a role in the propagation of Ca(2+) waves in Kolliker's organ in the cochlea and contributes to the refinement of auditory brainstem circuitries prior to hearing onset. In vomeronasal sensory neurons, modulates spontaneous firing patterns in the absence of stimuli as well as the firing pattern of pheromone-evoked activity. Responsible for calcium-activated chloride channel activity in type I taste cells of the vallate papillae. Acts as a heat sensor in nociceptive neurons. In dorsal root ganglion neurons, plays a role in mediating non-histaminergic Mas-related G-protein coupled receptor (MRGPR)-dependent itching, acting as a downstream effector of MRGPRs. In the developing brain, required for the Ca(2+)-dependent process extension of radial glial cells. The protein is Anoctamin-1 (Ano1) of Mus musculus (Mouse).